The following is a 326-amino-acid chain: Pyruvate dehydrogenase E1 component subunit beta (326 aa).

Glutamate 59 lines the thiamine diphosphate pocket.

As to quaternary structure, heterodimer of an alpha and a beta chain. Requires thiamine diphosphate as cofactor.

The catalysed reaction is N(6)-[(R)-lipoyl]-L-lysyl-[protein] + pyruvate + H(+) = N(6)-[(R)-S(8)-acetyldihydrolipoyl]-L-lysyl-[protein] + CO2. The pyruvate dehydrogenase complex catalyzes the overall conversion of pyruvate to acetyl-CoA and CO(2). It contains multiple copies of three enzymatic components: pyruvate dehydrogenase (E1), dihydrolipoamide acetyltransferase (E2) and lipoamide dehydrogenase (E3). This is Pyruvate dehydrogenase E1 component subunit beta (pdhB) from Rickettsia felis (strain ATCC VR-1525 / URRWXCal2) (Rickettsia azadi).